Consider the following 120-residue polypeptide: Ribonuclease P protein component (120 aa).

It belongs to the RnpA family. As to quaternary structure, consists of a catalytic RNA component (M1 or rnpB) and a protein subunit.

It carries out the reaction Endonucleolytic cleavage of RNA, removing 5'-extranucleotides from tRNA precursor.. RNaseP catalyzes the removal of the 5'-leader sequence from pre-tRNA to produce the mature 5'-terminus. It can also cleave other RNA substrates such as 4.5S RNA. The protein component plays an auxiliary but essential role in vivo by binding to the 5'-leader sequence and broadening the substrate specificity of the ribozyme. The polypeptide is Ribonuclease P protein component (Mycobacterium leprae (strain Br4923)).